We begin with the raw amino-acid sequence, 132 residues long: Small ribosomal subunit protein uS8 (132 aa).

This sequence belongs to the universal ribosomal protein uS8 family. In terms of assembly, part of the 30S ribosomal subunit. Contacts proteins S5 and S12.

Its function is as follows. One of the primary rRNA binding proteins, it binds directly to 16S rRNA central domain where it helps coordinate assembly of the platform of the 30S subunit. In Streptococcus pyogenes serotype M1, this protein is Small ribosomal subunit protein uS8.